Reading from the N-terminus, the 343-residue chain is MTTITITRPDDWHIHLRDGAQLKDTVRDISRYMGRAIVMPNLVPPAIDTETALTYYDRIKAQVPAGSQFEPLMVLYLTDKTSPDEIRRAKASGKIVAAKLYPAGATTNSDSGVTDLKNIYPALEAMQEVGMLFLVHGEVTDSSIDIFDRERVFIENILSKIVADFPELKIVLEHITTKDAVDFVTQASDNVAATITAHHLLYNRNHMLAGGIRPHFYCLPILKRNTHQQALLAAAASGSKKFFLGTDSAPHAKDKKEAACGCAGSYTAHAAIELYAEAFESVNALDKLEAFASFNGPDFYNLPRNADTITLVKKPWNVPATYPLGDTNVVPIRAGEAIDWQVE.

The Zn(2+) site is built by His-13 and His-15. Substrate-binding positions include 15 to 17 (HLR) and Asn-41. Lys-99, His-136, and His-174 together coordinate Zn(2+). An N6-carboxylysine modification is found at Lys-99. Position 136 (His-136) interacts with substrate. Residue Leu-219 participates in substrate binding. Asp-247 is a binding site for Zn(2+). Asp-247 is an active-site residue. His-251 and Ala-263 together coordinate substrate.

Belongs to the metallo-dependent hydrolases superfamily. DHOase family. Class II DHOase subfamily. In terms of assembly, homodimer. The cofactor is Zn(2+).

The catalysed reaction is (S)-dihydroorotate + H2O = N-carbamoyl-L-aspartate + H(+). The protein operates within pyrimidine metabolism; UMP biosynthesis via de novo pathway; (S)-dihydroorotate from bicarbonate: step 3/3. Functionally, catalyzes the reversible cyclization of carbamoyl aspartate to dihydroorotate. This chain is Dihydroorotase, found in Shewanella baltica (strain OS195).